We begin with the raw amino-acid sequence, 373 residues long: mRNA export factor rae-1 (373 aa).

M1 is subject to N-acetylmethionine. WD repeat units lie at residues 40–82 (APED…TFEG), 87–126 (NIPA…VAVV), 128–169 (THDG…NQTQ), and 276–315 (QEIY…KLKT).

The protein belongs to the WD repeat rae1 family. As to quaternary structure, the nuclear pore complex (NPC) constitutes the exclusive means of nucleocytoplasmic transport. NPCs allow the passive diffusion of ions and small molecules and the active, nuclear transport receptor-mediated bidirectional transport of macromolecules such as proteins, RNAs, ribonucleoparticles (RNPs), and ribosomal subunits across the nuclear envelope. Interacts with rpm-1. In terms of tissue distribution, expressed along the ventral and dorsal nerve cords.

It is found in the nucleus. It localises to the nuclear pore complex. The protein localises to the cell projection. Its subcellular location is the axon. The protein resides in the synapse. Functions as a component of the nuclear pore complex (NPC). NPC components, collectively referred to as nucleoporins (NUPs), can play the role of both NPC structural components and of docking or interaction partners for transiently associated nuclear transport factors. It is specifically important for nuclear mRNA export. Has a role in neuronal development, where it acts downstream of rpm-1 to control axon termination and synapse formation in anterior lateral microtubule (ALM) and posterior lateral microtubule (PLM) mechanosensory neurons. The chain is mRNA export factor rae-1 from Caenorhabditis elegans.